The sequence spans 493 residues: (+)-menthofuran synthase (493 aa).

Met1 is a topological domain (cytoplasmic). Residues 2 to 19 form a helical; Signal-anchor for type II membrane protein membrane-spanning segment; sequence AALLVFFSVSLILLAVLF. At 20–493 the chain is on the lumenal side; that stretch reads HKRKSSLSSR…LLVLATPRQS (474 aa). N-linked (GlcNAc...) asparagine glycosylation is present at Asn169. Cys434 lines the heme pocket.

It belongs to the cytochrome P450 family. It depends on heme as a cofactor.

Its subcellular location is the membrane. It carries out the reaction (R)-pulegone + reduced [NADPH--hemoprotein reductase] + O2 = (R)-menthofuran + oxidized [NADPH--hemoprotein reductase] + 2 H2O + H(+). The protein operates within secondary metabolite biosynthesis; terpenoid biosynthesis. Functionally, monoterpene synthase that catalyzes the formation of (+)-menthofuran from (+)-pulegone. The chain is (+)-menthofuran synthase from Mentha piperita (Peppermint).